Here is a 121-residue protein sequence, read N- to C-terminus: MTLRAVGVRLLGGLLLFALLAAGAAPLGWDLPESRSRASKIRVHPRGNLWATGHFMGKKSLEPPSPSLLGTAPHTSLRDQTPQLSHHLLRVLLQKQALGMSLSVPAPNTQHRRLLVQTLQK.

A signal peptide spans 1–24; that stretch reads MTLRAVGVRLLGGLLLFALLAAGA. A Methionine amide modification is found at Met-56. Residues 60-121 constitute a propeptide that is removed on maturation; it reads SLEPPSPSLL…RRLLVQTLQK (62 aa). A disordered region spans residues 61–80; that stretch reads LEPPSPSLLGTAPHTSLRDQ.

Belongs to the bombesin/neuromedin-B/ranatensin family.

Its subcellular location is the secreted. It is found in the cell projection. The protein resides in the neuron projection. Functionally, stimulates smooth muscle contraction. Induces sighing by acting directly on the pre-Botzinger complex, a cluster of several thousand neurons in the ventrolateral medulla responsible for inspiration during respiratory activity. Contributes to the induction of sneezing following exposure to chemical irritants or allergens which causes release of NMB by nasal sensory neurons and activation of NMBR-expressing neurons in the sneeze-evoking region of the brainstem. These in turn activate neurons of the caudal ventral respiratory group, giving rise to the sneezing response. Contributes to induction of acute itch, possibly through activation of the NMBR receptor on dorsal root ganglion neurons. Increases expression of NMBR and steroidogenic mediators STAR, CYP11A1 and HSD3B1 in Leydig cells, induces secretion of testosterone by Leydig cells and also promotes Leydig cell proliferation. Plays a role in the innate immune response to influenza A virus infection by enhancing interferon alpha expression and reducing expression of IL6. Plays a role in CSF1-induced proliferation of osteoclast precursors by contributing to the positive regulation of the expression of the CSF1 receptor CSF1R. The protein is Neuromedin-B (NMB) of Bos taurus (Bovine).